We begin with the raw amino-acid sequence, 212 residues long: Pyrrolidone-carboxylate peptidase (212 aa).

Residues Glu-80, Cys-143, and His-165 contribute to the active site.

The protein belongs to the peptidase C15 family. Homotetramer.

It is found in the cytoplasm. It catalyses the reaction Release of an N-terminal pyroglutamyl group from a polypeptide, the second amino acid generally not being Pro.. Functionally, removes 5-oxoproline from various penultimate amino acid residues except L-proline. This chain is Pyrrolidone-carboxylate peptidase, found in Aliivibrio fischeri (strain MJ11) (Vibrio fischeri).